The chain runs to 262 residues: Spindlin-1 (262 aa).

Residues 1 to 49 (MKTPFGKTPGQRSRADAGHAGVSANMMKKRTSHKKHRTSVGPSKPVSQP) form a disordered region. Glycyl lysine isopeptide (Lys-Gly) (interchain with G-Cter in SUMO2) cross-links involve residues Lys7 and Lys28. A compositionally biased stretch (basic residues) spans 27–38 (MKKRTSHKKHRT). N6-acetyllysine; alternate is present on Lys44. Lys44 is covalently cross-linked (Glycyl lysine isopeptide (Lys-Gly) (interchain with G-Cter in SUMO2); alternate). Positions 53–116 (IVGCRIQHGW…RVSALEVLPD (64 aa)) are tudor-like domain 1. Residues 93-98 (GFDCVY) form a histone H3K4me3 and H3R8me2a binding region. Ser109 and Ser124 each carry phosphoserine; by AURKA. The segment at 132-193 (MIGKAVEHMF…DYKEGDLRIM (62 aa)) is tudor-like domain 2. Glu142 is a region of interest (histone H3K4me3 and H3R8me2a binding). Ser199 is subject to Phosphoserine. The tudor-like domain 3 stretch occupies residues 213–262 (LVGKQVEYAKEDGSKRTGMVIHQVEAKPSVYFIKFDDDFHIYVYDLVKTS). Residues 250-252 (DFH) form a histone H3K4me3 and H3R8me2a binding region.

It belongs to the SPIN/STSY family. As to quaternary structure, homodimer; may form higher-order oligomers. Interacts with TCF7L2/TCF4; the interaction is direct. Interacts with HABP4 and SERBP1. Interacts with SPINDOC; SPINDOC stabilizes SPIN1 and enhances its association with bivalent H3K4me3K9me3 mark. Interacts with SPOCD1; promoting recruitment of PIWIL4 and SPOCD1 to transposons. Phosphorylated during oocyte meiotic maturation.

The protein localises to the nucleus. The protein resides in the nucleolus. Its function is as follows. Chromatin reader that specifically recognizes and binds histone H3 both trimethylated at 'Lys-4' and 'Lys-9' (H3K4me3K9me3) and is involved in piRNA-mediated retrotransposon silencing during spermatogenesis. Plays a key role in the initiation of the PIWIL4-piRNA pathway, a pathway that directs transposon DNA methylation and silencing in the male embryonic germ cells, by promoting recruitment of DNA methylation machinery to transposons: binds young, but not old, LINE1 transposons, which are specifically marked with H3K4me3K9me3, and promotes the recruitment of PIWIL4 and SPOCD1 to transposons, leading to piRNA-directed DNA methylation. Also recognizes and binds histone H3 both trimethylated at 'Lys-4' and asymmetrically dimethylated at 'Arg-8' (H3K4me3 and H3R8me2a) and acts as an activator of Wnt signaling pathway downstream of PRMT2. Overexpression induces metaphase arrest and chromosomal instability. Overexpression induces metaphase arrest and chromosomal instability. Localizes to active rDNA loci and promotes the expression of rRNA genes. May play a role in cell-cycle regulation during the transition from gamete to embryo. Involved in oocyte meiotic resumption, a process that takes place before ovulation to resume meiosis of oocytes blocked in prophase I: may act by regulating maternal transcripts to control meiotic resumption. This chain is Spindlin-1 (Spin1), found in Rattus norvegicus (Rat).